We begin with the raw amino-acid sequence, 82 residues long: Toxin TdNa6 (82 aa).

The signal sequence occupies residues 1–20 (MKGMIMLISCLMLIEVVVGG). The LCN-type CS-alpha/beta domain maps to 21–82 (KEGYLLDRSN…KMWHLKTNKC (62 aa)). 4 disulfides stabilise this stretch: cysteine 32–cysteine 82, cysteine 36–cysteine 58, cysteine 44–cysteine 63, and cysteine 48–cysteine 65.

It belongs to the long (4 C-C) scorpion toxin superfamily. Sodium channel inhibitor family. Beta subfamily. In terms of tissue distribution, expressed by the venom gland.

The protein resides in the secreted. In terms of biological role, beta toxins bind voltage-independently at site-4 of sodium channels (Nav) and shift the voltage of activation toward more negative potentials thereby affecting sodium channel activation and promoting spontaneous and repetitive firing. Is toxic to arthropods. This is Toxin TdNa6 from Tityus discrepans (Venezuelan scorpion).